A 2869-amino-acid chain; its full sequence is uncharacterized protein (2869 aa).

Over residues methionine 1–aspartate 10 the composition is skewed to low complexity. Disordered stretches follow at residues methionine 1 to lysine 132, asparagine 171 to arginine 349, phenylalanine 380 to serine 485, lysine 498 to lysine 517, asparagine 690 to glutamine 812, isoleucine 860 to asparagine 1074, isoleucine 1108 to serine 1175, serine 1188 to aspartate 1216, valine 1224 to threonine 1243, glutamate 1340 to isoleucine 1448, isoleucine 1476 to tyrosine 1704, asparagine 1731 to phenylalanine 1832, and aspartate 2725 to glutamate 2773. The span at histidine 14–phenylalanine 25 shows a compositional bias: polar residues. Low complexity-rich tracts occupy residues glycine 26–asparagine 124, asparagine 171–tyrosine 348, asparagine 388–asparagine 414, tyrosine 421–lysine 446, and lysine 454–asparagine 478. A compositionally biased stretch (basic and acidic residues) spans histidine 505–lysine 514. 2 stretches are compositionally biased toward low complexity: residues asparagine 690–glutamine 707 and proline 714–glutamine 749. The segment covering tyrosine 750 to glutamine 763 has biased composition (basic and acidic residues). A compositionally biased stretch (low complexity) spans asparagine 764–glutamine 781. Residues tyrosine 782–glutamine 795 are compositionally biased toward basic and acidic residues. Low complexity-rich tracts occupy residues asparagine 796–glutamine 812, isoleucine 860–asparagine 891, aspartate 898–aspartate 911, cysteine 921–asparagine 991, and asparagine 1000–asparagine 1074. Over residues serine 1188–isoleucine 1212 the composition is skewed to low complexity. The span at threonine 1230–threonine 1243 shows a compositional bias: polar residues. Composition is skewed to low complexity over residues aspartate 1377 to isoleucine 1448 and isoleucine 1476 to aspartate 1639. Residues isoleucine 1640 to asparagine 1659 are compositionally biased toward acidic residues. 3 stretches are compositionally biased toward low complexity: residues valine 1660–tyrosine 1704, asparagine 1731–serine 1823, and serine 2739–serine 2754. Positions asparagine 2758–glutamate 2773 are enriched in acidic residues.

This is an uncharacterized protein from Dictyostelium discoideum (Social amoeba).